We begin with the raw amino-acid sequence, 2385 residues long: MPVLGVASKLRQPAVGSKPVHTALPIPNLGTTGSQHCSSRPLELTETESSMLSCQLALKSTCEFGEKKPLQGKAKEKEDSKIYTDWANHYLAKSGHKRLIKDLQQDIADGVLLAEIIQIIANEKVEDINGCPRSQSQMIENVDVCLSFLAARGVNVQGLSAEEIRNGNLKAILGLFFSLSRYKQQQHHQQQYYQSLVELQQRVTHASPPSEASQAKTQQDMQSSLAARYATQSNHSGIATSQKKPTRLPGPSRVPAAGSSSKVQGASNLNRRSQSFNSIDKNKPPNYANGNEKDSSKGPQSSSGVNGNVQPPSTAGQPPASAIPSPSASKPWRSKSMNVKHSATSTMLTVKQSSTATSPTPSSDRLKPPVSEGVKTAPSGQKSMLEKFKLVNARTALRPPQPPSSGPSDGGKDDDAFSESGEMEGFNSGLNSGGSTNSSPKVSPKLAPPKAGSKNLSNKKSLLQPKEKEEKNRDKNKVCTEKPVKEEKDQVTEMAPKKTSKIASLIPKGSKTTAAKKESLIPSSSGIPKPGSKVPTVKQTISPGSTASKESEKFRTTKGSPSQSLSKPITMEKASASSCPAPLEGREAGQASPSGSCTMTVAQSSGQSTGNGAVQLPQQQQHSHPNTATVAPFIYRAHSENEGTALPSADSCTSPTKMDLSYSKTAKQCLEEISGEDPETRRMRTVKNIADLRQNLEETMSSLRGTQISHSTLETTFDSTVTTEVNGRTIPNLTSRPTPMTWRLGQACPRLQAGDAPSLGAGYPRSGTSRFIHTDPSRFMYTTPLRRAAVSRLGNMSQIDMSEKASSDLDMSSEVDVGGYMSDGDILGKSLRTDDINSGYMTDGGLNLYTRSLNRIPDTATSRDIIQRGVHDVTVDADSWDDSSSVSSGLSDTLDNISTDDLNTTSSVSSYSNITVPSRKNTQLRTDSEKRSTTDETWDSPEELKKPEEDFDSHGDAGGKWKTVSSGLPEDPEKAGQKASLSVSQTGSWRRGMSAQGGAPSRQKAGTSALKTPGKTDDAKASEKGKAPLKGSSLQRSPSDAGKSSGDEGKKPPSGIGRSTATSSFGFKKPSGVGSSAMITSSGATITSGSATLGKIPKSAAIGGKSNAGRKTSLDGSQNQDDVVLHVSSKTTLQYRSLPRPSKSSTSGIPGRGGHRSSTSSIDSNVSSKSAGATTSKLREPTKIGSGRSSPVTVNQTDKEKEKVAVSDSESVSLSGSPKSSPTSASACGAQGLRQPGSKYPDIASPTFRRLFGAKAGGKSASAPNTEGVKSSSVMPSPSTTLARQGSLESPSSGTGSMGSAGGLSGSSSPLFNKPSDLTTDVISLSHSLASSPASVHSFTSGGLVWAANMSSSSAGSKDTPSYQSMTSLHTSSESIDLPLSHHGSLSGLTTGTHEVQSLLMRTGSVRSTLSESMQLDRNTLPKKGLRYTPSSRQANQEEGKEWLRSHSTGGLQDTGNQSPLVSPSAMSSSAAGKYHFSNLVSPTNLSQFNLPGPSMMRSNSIPAQDSSFDLYDDSQLCGSATSLEERPRAISHSGSFRDSMEEVHGSSLSLVSSTSSLYSTAEEKAHSEQIHKLRRELVASQEKVATLTSQLSANAHLVAAFEKSLGNMTGRLQSLTMTAEQKESELIELRETIEMLKAQNSAAQAAIQGALNGPDHPPKDLRIRRQHSSESVSSINSATSHSSIGSGNDADSKKKKKKNWVNSRGSELRSSFKQAFGKKKSTKPPSSHSDIEELTDSSLPASPKLPHNAGDCGSASMKPSQSASASPLVWPPKKRQNGPVIYKHRSRICECTEAEAEIILQLKSELREKELKLTDIRLEALSSAHHLDQIREAMNRMQNEIEILKAENDRLKAETGNTAKPTRPPSESSSSTSSSSSRQSLGLSLNNLNITEAVSSDILLDDAGDATGHKDGRSVKIIVSISKGYGRAKDQKSQAYLIGSIGVSGKTKWDVLDGVIRRLFKEYVFRIDTSTSLGLSSDCIASYCIGDLIRSHNLEVPELLPCGYLVGDNNIITVNLKGVEENSLDSFVFDTLIPKPITQRYFNLLMEHHRIILSGPSGTGKTYLANKLAEYVITKSGRKKTEDAIATFNVDHKSSKELQQYLANLAEQCSADNNGVELPVVIILDNLHHVGSLSDIFNGFLNCKYNKCPYIIGTMNQGVSSSPNLELHHNFRWVLCANHTEPVKGFLGRYLRRKLIEIEIERNIRNNDLVKIIDWIPKTWHHLNSFLETHSSSDVTIGPRLFLPCPMDVEGSRVWFMDLWNYSLVPYILEAVREGLQMYGKRTPWEDPSKWVLDTYPWSSATLPQESPALLQLRPEDVGYESCTSTKEATTSKHIPQTDTEGDPLMNMLMKLQEAANYSSTQSCDSESTSHHEDILDSSLESTL.

The interval 17 to 38 (SKPVHTALPIPNLGTTGSQHCS) is disordered. Polar residues predominate over residues 29–38 (LGTTGSQHCS). One can recognise a Calponin-homology (CH) domain in the interval 77 to 184 (KEDSKIYTDW…LFFSLSRYKQ (108 aa)). The tract at residues 203–625 (VTHASPPSEA…LPQQQQHSHP (423 aa)) is disordered. Composition is skewed to polar residues over residues 210 to 243 (SEAS…TSQK), 258 to 279 (GSSS…FNSI), and 297 to 316 (KGPQ…STAG). Residues 318–329 (PPASAIPSPSAS) show a composition bias toward low complexity. The span at 335-352 (KSMNVKHSATSTMLTVKQ) shows a compositional bias: polar residues. Composition is skewed to low complexity over residues 353–363 (SSTATSPTPSS) and 427–439 (NSGL…TNSS). Positions 465 to 491 (PKEKEEKNRDKNKVCTEKPVKEEKDQV) are enriched in basic and acidic residues. A compositionally biased stretch (low complexity) spans 521–535 (IPSSSGIPKPGSKVP). Composition is skewed to polar residues over residues 537 to 548 (VKQTISPGSTAS), 557 to 567 (TKGSPSQSLSK), and 591 to 625 (ASPS…HSHP). Residues 679-707 (ETRRMRTVKNIADLRQNLEETMSSLRGTQ) adopt a coiled-coil conformation. Disordered regions lie at residues 877–1312 (ADSW…SPLF), 1351–1370 (SSSS…TSLH), 1410–1468 (LSES…SAMS), 1650–1778 (GALN…KRQN), 1850–1881 (DRLK…SRQS), and 2360–2385 (SSTQ…ESTL). Low complexity predominate over residues 882-895 (DSSSVSSGLSDTLD). Polar residues predominate over residues 896–925 (NISTDDLNTTSSVSSYSNITVPSRKNTQLR). Residues 942-959 (EELKKPEEDFDSHGDAGG) are compositionally biased toward basic and acidic residues. Polar residues predominate over residues 979–988 (ASLSVSQTGS). A compositionally biased stretch (basic and acidic residues) spans 1014 to 1026 (GKTDDAKASEKGK). Low complexity-rich tracts occupy residues 1074–1092 (GSSA…GSAT) and 1157–1170 (SSTS…SSKS). Residues 1187-1196 (GRSSPVTVNQ) show a composition bias toward polar residues. Composition is skewed to low complexity over residues 1206–1226 (VSDS…TSAS) and 1253–1263 (GAKAGGKSASA). Residues 1264 to 1289 (PNTEGVKSSSVMPSPSTTLARQGSLE) show a composition bias toward polar residues. Gly residues predominate over residues 1296–1305 (GSMGSAGGLS). Over residues 1436–1445 (NQEEGKEWLR) the composition is skewed to basic and acidic residues. Positions 1446–1462 (SHSTGGLQDTGNQSPLV) are enriched in polar residues. 2 positions are modified to phosphoserine: Ser-1459 and Ser-1463. Residues 1562–1653 (AEEKAHSEQI…AQAAIQGALN (92 aa)) adopt a coiled-coil conformation. Positions 1672–1689 (SVSSINSATSHSSIGSGN) are enriched in low complexity. A compositionally biased stretch (polar residues) spans 1701-1714 (WVNSRGSELRSSFK). Residues 1794–1861 (EAEAEIILQL…LKAETGNTAK (68 aa)) are a coiled coil. Over residues 1867-1881 (SESSSSTSSSSSRQS) the composition is skewed to low complexity.

Belongs to the Nav/unc-53 family. In terms of tissue distribution, highly expressed in brain. Expressed at low levels in heart and placenta. Present in activated T-cells but not in resting T-cells (at protein level). Down-regulated in primary neuroblastoma.

The protein localises to the nucleus outer membrane. Plays a role in cell migration. May be involved in neuron regeneration. May regulate IL2 production by T-cells. The polypeptide is Neuron navigator 3 (NAV3) (Homo sapiens (Human)).